A 760-amino-acid polypeptide reads, in one-letter code: Prolyl endopeptidase FAP (760 aa).

Residues 1–4 (MKTW) are Cytoplasmic-facing. Residues 5–25 (VKIVFGVATSAVLALLVMCIV) traverse the membrane as a helical; Signal-anchor for type II membrane protein segment. Residues 26–760 (LRPSRVHNSE…FLKQCFSLSD (735 aa)) are Extracellular-facing. N-linked (GlcNAc...) asparagine glycans are attached at residues asparagine 49, asparagine 92, and asparagine 99. Positions 203 and 204 each coordinate substrate. Residues asparagine 227 and asparagine 314 are each glycosylated (N-linked (GlcNAc...) asparagine). Intrachain disulfides connect cysteine 321-cysteine 332, cysteine 438-cysteine 441, and cysteine 448-cysteine 466. The Charge relay system role is filled by serine 624. A disulfide bridge links cysteine 643 with cysteine 755. A glycan (N-linked (GlcNAc...) asparagine) is linked at asparagine 679. Catalysis depends on charge relay system residues aspartate 702 and histidine 734.

The protein belongs to the peptidase S9B family. In terms of assembly, homodimer; homodimerization is required for activity of both plasma membrane and soluble forms. The monomer is inactive. Heterodimer with DPP4. Interacts with PLAUR; the interaction occurs at the cell surface of invadopodia membranes. Interacts with ITGB1. Interacts with ITGA3. Associates with integrin alpha-3/beta-1; the association occurs in a collagen-dependent manner at the cell surface of invadopodia membranes. Post-translationally, N-glycosylated. The N-terminus may be blocked. As to expression, expressed in adipose tissue. Expressed in the dermal fibroblasts in the fetal skin. Expressed in the granulation tissue of healing wounds and on reactive stromal fibroblast in epithelial cancers. Expressed in activated fibroblast-like synoviocytes from inflamed synovial tissues. Expressed in activated hepatic stellate cells (HSC) and myofibroblasts from cirrhotic liver, but not detected in normal liver. Expressed in glioma cells (at protein level). Expressed in glioblastomas and glioma cells. Isoform 1 and isoform 2 are expressed in melanoma, carcinoma and fibroblast cell lines.

It is found in the cell surface. The protein localises to the cell membrane. Its subcellular location is the cell projection. It localises to the lamellipodium membrane. The protein resides in the invadopodium membrane. It is found in the ruffle membrane. The protein localises to the membrane. Its subcellular location is the secreted. It localises to the cytoplasm. It carries out the reaction Hydrolysis of Pro-|-Xaa &gt;&gt; Ala-|-Xaa in oligopeptides.. The enzyme catalyses Release of an N-terminal dipeptide, Xaa-Yaa-|-Zaa-, from a polypeptide, preferentially when Yaa is Pro, provided Zaa is neither Pro nor hydroxyproline.. With respect to regulation, gelatinase activity is inhibited by serine-protease inhibitors, such as phenylmethylsulfonyl fluoride (PMSF), 4-(2-aminoethyl)-benzenesulfonyl fluoride hydrochloride (AEBSF), 4-amidino phenylsulfonyl fluoride (APSF) and diisopropyl fluorophosphate (DFP), N-ethylmaleimide (NEM) and phenylmethylsulfonyl fluoride (PMSF). Dipeptidyl peptidase activity is inhibited by 2,2'-azino-bis(3-ethylbenzthiazoline-6-sulfonic acid), diisopropylfluorophosphate (DFP). Prolyl endopeptidase activity is inhibited by the boronic acid peptide Ac-Gly-BoroPro, Ac-Gly-Pro-chloromethyl ketone and Thr-Ser-Gly-chloromethyl ketone. In terms of biological role, cell surface glycoprotein serine protease that participates in extracellular matrix degradation and involved in many cellular processes including tissue remodeling, fibrosis, wound healing, inflammation and tumor growth. Both plasma membrane and soluble forms exhibit post-proline cleaving endopeptidase activity, with a marked preference for Ala/Ser-Gly-Pro-Ser/Asn/Ala consensus sequences, on substrate such as alpha-2-antiplasmin SERPINF2 and SPRY2. Degrade also gelatin, heat-denatured type I collagen, but not native collagen type I and IV, vitronectin, tenascin, laminin, fibronectin, fibrin or casein. Also has dipeptidyl peptidase activity, exhibiting the ability to hydrolyze the prolyl bond two residues from the N-terminus of synthetic dipeptide substrates provided that the penultimate residue is proline, with a preference for Ala-Pro, Ile-Pro, Gly-Pro, Arg-Pro and Pro-Pro. Natural neuropeptide hormones for dipeptidyl peptidase are the neuropeptide Y (NPY), peptide YY (PYY), substance P (TAC1) and brain natriuretic peptide 32 (NPPB). The plasma membrane form, in association with either DPP4, PLAUR or integrins, is involved in the pericellular proteolysis of the extracellular matrix (ECM), and hence promotes cell adhesion, migration and invasion through the ECM. Plays a role in tissue remodeling during development and wound healing. Participates in the cell invasiveness towards the ECM in malignant melanoma cancers. Enhances tumor growth progression by increasing angiogenesis, collagen fiber degradation and apoptosis and by reducing antitumor response of the immune system. Promotes glioma cell invasion through the brain parenchyma by degrading the proteoglycan brevican. Acts as a tumor suppressor in melanocytic cells through regulation of cell proliferation and survival in a serine protease activity-independent manner. The protein is Prolyl endopeptidase FAP of Homo sapiens (Human).